The sequence spans 203 residues: MSGQRVDVKVVMLGKEYVGKTSLVERYVHDRFLVGPYQNTIGAAFVAKVMCVGDRTVTLGIWDTAGSERYEAMSRIYYRGAKAAIVCYDLTDSSSFERAKFWVKELRSLEEGCQIYLCGTKSDLLEEDRRRRRVDFHDVQDYADNIKAQLFETSSKTGQSVDELFQKVAEDYVSVAAFQVMTEDKGVDLSQKANPYFYSCCHH.

Y17 is subject to Phosphotyrosine. G19, K20, T21, and T40 together coordinate GTP. Mg(2+) is bound by residues T21, T40, and D63. Residues 30–45 form a switch I region; it reads DRFLVGPYQNTIGAAF. The interval 63-80 is switch II; that stretch reads DTAGSERYEAMSRIYYRG. The GTP site is built by G66, K121, D123, and K156. Phosphotyrosine is present on Y172. Residues C200 and C201 are each lipidated (S-geranylgeranyl cysteine).

This sequence belongs to the small GTPase superfamily. Rab family. Interacts with ZFYVE20. Does not interact with the GDP dissociation inhibitors ARHGDIA and ARHGDIB. The cofactor is Mg(2+). Post-translationally, prenylated; prenylation is required for RAB24 localization to autophagosomes. Isoprenylation is inefficient compared to other Rab family members. In terms of processing, phosphorylated at Tyr-17 and Tyr-172. Cytosolic pool of RAB24 is more phosphorylated than the membrane-associated pool. Widely expressed, with highest expression in brain.

It is found in the cytoplasm. The protein resides in the cytosol. It localises to the membrane. Its subcellular location is the cytoplasmic vesicle. The protein localises to the autophagosome membrane. It is found in the perinuclear region. The protein resides in the cytoskeleton. It localises to the spindle. The catalysed reaction is GTP + H2O = GDP + phosphate + H(+). Regulated by guanine nucleotide exchange factors (GEFs) which promote the exchange of bound GDP for free GTP. Regulated by GTPase activating proteins (GAPs) which increase the GTP hydrolysis activity. Inhibited by GDP dissociation inhibitors (GDIs). In terms of biological role, the small GTPases Rab are key regulators of intracellular membrane trafficking, from the formation of transport vesicles to their fusion with membranes. Rabs cycle between an inactive GDP-bound form and an active GTP-bound form that is able to recruit to membranes different sets of downstream effectors directly responsible for vesicle formation, movement, tethering and fusion. RAB24 is an atypical RAB protein that presents low GTPase activity and thereby exists predominantly in the GTP-bound active state. RAB24 is required for the clearance of late autophagic vacuoles under basal conditions. It is not needed for starvation-induced autophagy. Involved in the modulation of meiotic apparatus assembly and meiotic progression during oocyte maturation, possibly through regulation of kinetochore-microtubule interaction. The polypeptide is Ras-related protein Rab-24 (Mus musculus (Mouse)).